The chain runs to 328 residues: DNA-directed RNA polymerase subunit alpha (328 aa).

The interval 1-230 (MIQITGRKFK…IILDHFMFIE (230 aa)) is alpha N-terminal domain (alpha-NTD). An alpha C-terminal domain (alpha-CTD) region spans residues 257 to 328 (PEDVMSKKVE…FGLSLRKGDK (72 aa)).

It belongs to the RNA polymerase alpha chain family. As to quaternary structure, homodimer. The RNAP catalytic core consists of 2 alpha, 1 beta, 1 beta' and 1 omega subunit. When a sigma factor is associated with the core the holoenzyme is formed, which can initiate transcription.

It catalyses the reaction RNA(n) + a ribonucleoside 5'-triphosphate = RNA(n+1) + diphosphate. In terms of biological role, DNA-dependent RNA polymerase catalyzes the transcription of DNA into RNA using the four ribonucleoside triphosphates as substrates. The sequence is that of DNA-directed RNA polymerase subunit alpha from Fervidobacterium nodosum (strain ATCC 35602 / DSM 5306 / Rt17-B1).